The sequence spans 173 residues: Large ribosomal subunit protein uL29c (173 aa).

A chloroplast-targeting transit peptide spans 1-60; it reads MLSLSIATPGTAAIFRRGTASATSTSSSFHGVRIQHQVSARVPAAATISSSSPKPSVVMM. A disordered region spans residues 143-173; it reads KKSIVPRPPPSLKKLQEEEAAEEAAEAAKSA. Phosphoserine is present on Ser172.

This sequence belongs to the universal ribosomal protein uL29 family. Part of the 50S ribosomal subunit.

It localises to the plastid. The protein resides in the chloroplast. The sequence is that of Large ribosomal subunit protein uL29c (RPL29) from Arabidopsis thaliana (Mouse-ear cress).